Consider the following 1008-residue polypeptide: RNA cytidine acetyltransferase (1008 aa).

Residues 282–291 and R443 each bind ATP; that span reads GRGKSAALGL. One can recognise an N-acetyltransferase domain in the interval 531–713; sequence CLLGPVQRMD…VPVYLSQKSN (183 aa). Acetyl-CoA-binding positions include 601 to 603, 608 to 614, and N700; these read VAT and QRMGYGK. Phosphoserine is present on S907. A disordered region spans residues 950-1008; it reads ALETNGTGGGSGLLSVKSGVKRLDGPIETREDGDLAAPLSKKKKKNNPKQRRSQGKSLI. Residues 970–982 show a composition bias toward basic and acidic residues; that stretch reads KRLDGPIETREDG. The span at 989 to 1008 shows a compositional bias: basic residues; that stretch reads SKKKKKNNPKQRRSQGKSLI.

This sequence belongs to the RNA cytidine acetyltransferase family. NAT10 subfamily. Component of the PRC1 complex (PSC, PC, PH and dRING1) in 0-12 hours Drosophila embryos. This complex is distinct from the Esc/E(z) complex, which contains many other PcG proteins like Esc, E(z), Su(z)12, HDAC1/Rpd3, Caf1-55 and probably Pho. The two complexes however cooperate and interact together during the first 3 hours of development to establish PcG silencing. Part of the small subunit (SSU) processome, composed of more than 70 proteins and the RNA chaperone small nucleolar RNA (snoRNA) U3.

The protein resides in the nucleus. Its subcellular location is the nucleolus. It catalyses the reaction a cytidine in 18S rRNA + acetyl-CoA + ATP + H2O = an N(4)-acetylcytidine in 18S rRNA + ADP + phosphate + CoA + H(+). It carries out the reaction a cytidine in tRNA + acetyl-CoA + ATP + H2O = an N(4)-acetylcytidine in tRNA + ADP + phosphate + CoA + H(+). Functionally, RNA cytidine acetyltransferase with specificity toward both 18S rRNA and tRNAs. Catalyzes the formation of N(4)-acetylcytidine (ac4C) in 18S rRNA. Required for early nucleolar cleavages of precursor rRNA at sites A0, A1 and A2 during 18S rRNA synthesis. Catalyzes the formation of ac4C in serine and leucine tRNAs. Requires a tRNA-binding adapter protein for full tRNA acetyltransferase activity but not for 18S rRNA acetylation. Polycomb group (PcG) protein. PcG proteins act by forming multiprotein complexes, which are required to maintain the transcriptionally repressive state of homeotic genes throughout development. PcG proteins are not required to initiate repression, but to maintain it during later stages of development. They probably act via the methylation of histones, rendering chromatin heritably changed in its expressibility. Part of the small subunit (SSU) processome, first precursor of the small eukaryotic ribosomal subunit. During the assembly of the SSU processome in the nucleolus, many ribosome biogenesis factors, an RNA chaperone and ribosomal proteins associate with the nascent pre-rRNA and work in concert to generate RNA folding, modifications, rearrangements and cleavage as well as targeted degradation of pre-ribosomal RNA by the RNA exosome. This is RNA cytidine acetyltransferase (l(1)G0020) from Drosophila melanogaster (Fruit fly).